Here is a 318-residue protein sequence, read N- to C-terminus: ADP-L-glycero-D-manno-heptose-6-epimerase (318 aa).

Residues 10–11, 31–32, Lys38, Lys53, and 79–83 each bind NADP(+); these read FI, DD, and EGACS. The active-site Proton acceptor is Tyr144. An NADP(+)-binding site is contributed by Lys148. Asn173 contributes to the substrate binding site. Residues Val174 and Lys182 each contribute to the NADP(+) site. The active-site Proton acceptor is the Lys182. Substrate-binding positions include Ser184, His191, 205–208, Arg218, and Tyr282; that span reads FEGC.

Belongs to the NAD(P)-dependent epimerase/dehydratase family. HldD subfamily. Homopentamer. It depends on NADP(+) as a cofactor.

It catalyses the reaction ADP-D-glycero-beta-D-manno-heptose = ADP-L-glycero-beta-D-manno-heptose. It participates in nucleotide-sugar biosynthesis; ADP-L-glycero-beta-D-manno-heptose biosynthesis; ADP-L-glycero-beta-D-manno-heptose from D-glycero-beta-D-manno-heptose 7-phosphate: step 4/4. Functionally, catalyzes the interconversion between ADP-D-glycero-beta-D-manno-heptose and ADP-L-glycero-beta-D-manno-heptose via an epimerization at carbon 6 of the heptose. This chain is ADP-L-glycero-D-manno-heptose-6-epimerase, found in Aeromonas hydrophila subsp. hydrophila (strain ATCC 7966 / DSM 30187 / BCRC 13018 / CCUG 14551 / JCM 1027 / KCTC 2358 / NCIMB 9240 / NCTC 8049).